The following is a 77-amino-acid chain: NADH-ubiquinone oxidoreductase chain 4L (77 aa).

2 helical membrane-spanning segments follow: residues 18–38 and 44–64; these read LMFI…LFSG and MFFY…VVMV.

This sequence belongs to the complex I subunit 4L family.

Its subcellular location is the mitochondrion membrane. The catalysed reaction is a ubiquinone + NADH + 5 H(+)(in) = a ubiquinol + NAD(+) + 4 H(+)(out). Its function is as follows. Core subunit of the mitochondrial membrane respiratory chain NADH dehydrogenase (Complex I) that is believed to belong to the minimal assembly required for catalysis. Complex I functions in the transfer of electrons from NADH to the respiratory chain. The immediate electron acceptor for the enzyme is believed to be ubiquinone. The polypeptide is NADH-ubiquinone oxidoreductase chain 4L (ND4L) (Ascaris suum (Pig roundworm)).